The sequence spans 437 residues: Trigger factor (437 aa).

A PPIase FKBP-type domain is found at 163 to 248 (GHMVTIDYAF…LNEIKRKELP (86 aa)).

The protein belongs to the FKBP-type PPIase family. Tig subfamily.

The protein localises to the cytoplasm. The catalysed reaction is [protein]-peptidylproline (omega=180) = [protein]-peptidylproline (omega=0). Functionally, involved in protein export. Acts as a chaperone by maintaining the newly synthesized protein in an open conformation. Functions as a peptidyl-prolyl cis-trans isomerase. This is Trigger factor from Pelobacter propionicus (strain DSM 2379 / NBRC 103807 / OttBd1).